The chain runs to 168 residues: Phosphopantetheine adenylyltransferase (168 aa).

Threonine 9 contacts substrate. ATP contacts are provided by residues 9-10 and histidine 17; that span reads TF. Substrate is bound by residues lysine 41, leucine 73, and arginine 87. Residues 88-90, glutamate 98, and 123-129 contribute to the ATP site; these read GLR and YQFISGT.

This sequence belongs to the bacterial CoaD family. Homohexamer. Mg(2+) serves as cofactor.

It is found in the cytoplasm. The catalysed reaction is (R)-4'-phosphopantetheine + ATP + H(+) = 3'-dephospho-CoA + diphosphate. Its pathway is cofactor biosynthesis; coenzyme A biosynthesis; CoA from (R)-pantothenate: step 4/5. Its function is as follows. Reversibly transfers an adenylyl group from ATP to 4'-phosphopantetheine, yielding dephospho-CoA (dPCoA) and pyrophosphate. The protein is Phosphopantetheine adenylyltransferase of Ralstonia nicotianae (strain ATCC BAA-1114 / GMI1000) (Ralstonia solanacearum).